The chain runs to 92 residues: Phosphoribosyl-ATP pyrophosphatase (92 aa).

It belongs to the PRA-PH family.

Its subcellular location is the cytoplasm. It carries out the reaction 1-(5-phospho-beta-D-ribosyl)-ATP + H2O = 1-(5-phospho-beta-D-ribosyl)-5'-AMP + diphosphate + H(+). It functions in the pathway amino-acid biosynthesis; L-histidine biosynthesis; L-histidine from 5-phospho-alpha-D-ribose 1-diphosphate: step 2/9. The chain is Phosphoribosyl-ATP pyrophosphatase from Leptospira borgpetersenii serovar Hardjo-bovis (strain JB197).